The sequence spans 503 residues: Galactose/methyl galactoside import ATP-binding protein MglA 2 (503 aa).

ABC transporter domains follow at residues 11–246 (LEMT…VGRE) and 257–503 (TPKE…SRYL). 43 to 50 (GENGAGKS) is a binding site for ATP.

This sequence belongs to the ABC transporter superfamily. Galactose/methyl galactoside importer (TC 3.A.1.2.3) family. In terms of assembly, the complex is composed of one ATP-binding protein (MglA), two transmembrane proteins (MglC) and a solute-binding protein (MglB).

Its subcellular location is the cell inner membrane. It carries out the reaction D-galactose(out) + ATP + H2O = D-galactose(in) + ADP + phosphate + H(+). The enzyme catalyses methyl beta-D-galactoside(out) + ATP + H2O = methyl beta-D-galactoside(in) + ADP + phosphate + H(+). Its function is as follows. Part of the ABC transporter complex MglABC involved in galactose/methyl galactoside import. Responsible for energy coupling to the transport system. This is Galactose/methyl galactoside import ATP-binding protein MglA 2 from Photobacterium profundum (strain SS9).